The following is a 155-amino-acid chain: Small ribosomal subunit protein uS7 (155 aa).

Belongs to the universal ribosomal protein uS7 family. Part of the 30S ribosomal subunit. Contacts proteins S9 and S11.

Functionally, one of the primary rRNA binding proteins, it binds directly to 16S rRNA where it nucleates assembly of the head domain of the 30S subunit. Is located at the subunit interface close to the decoding center, probably blocks exit of the E-site tRNA. The sequence is that of Small ribosomal subunit protein uS7 from Mesoplasma florum (strain ATCC 33453 / NBRC 100688 / NCTC 11704 / L1) (Acholeplasma florum).